We begin with the raw amino-acid sequence, 190 residues long: MELILGSQSSARANLLKEHGIKFEQKALYFDEESLKTTDPREFVYLACKGKLEKAKELLANNCAIVVADSVVSVGNRMQRKAKNKREALEFLKRQNGNEIEVLTCSALISPVLEWLDLSVFRARLKAFDCSEIEKYLESGLWQGSAGCVRLEDFHKPYIKSSSKNLSVGLGLNVEGLLGALKLGVKLSLL.

Aspartate 69 serves as the catalytic Proton acceptor.

This sequence belongs to the Maf family. A divalent metal cation serves as cofactor.

Its subcellular location is the cytoplasm. The catalysed reaction is a ribonucleoside 5'-triphosphate + H2O = a ribonucleoside 5'-phosphate + diphosphate + H(+). It catalyses the reaction a 2'-deoxyribonucleoside 5'-triphosphate + H2O = a 2'-deoxyribonucleoside 5'-phosphate + diphosphate + H(+). Its function is as follows. Nucleoside triphosphate pyrophosphatase. May have a dual role in cell division arrest and in preventing the incorporation of modified nucleotides into cellular nucleic acids. This Helicobacter pylori (strain J99 / ATCC 700824) (Campylobacter pylori J99) protein is Nucleoside triphosphate pyrophosphatase.